Reading from the N-terminus, the 366-residue chain is Glutamate 5-kinase (366 aa).

ATP is bound at residue Lys-17. Positions 57, 144, and 156 each coordinate substrate. Residues 176–177 (SD) and 216–222 (TGGMASK) contribute to the ATP site. The 75-residue stretch at 278–352 (RGALVLDDGA…GRSTTELPDT (75 aa)) folds into the PUA domain.

It belongs to the glutamate 5-kinase family.

The protein resides in the cytoplasm. The enzyme catalyses L-glutamate + ATP = L-glutamyl 5-phosphate + ADP. It participates in amino-acid biosynthesis; L-proline biosynthesis; L-glutamate 5-semialdehyde from L-glutamate: step 1/2. Its function is as follows. Catalyzes the transfer of a phosphate group to glutamate to form L-glutamate 5-phosphate. The sequence is that of Glutamate 5-kinase from Nocardia farcinica (strain IFM 10152).